A 145-amino-acid polypeptide reads, in one-letter code: Oleosin L (145 aa).

Ala-2 is modified (N-acetylalanine). The next 2 membrane-spanning stretches (helical) occupy residues 36–56 (GSLLVLSGLTLAGTVIALTIA) and 59–79 (LLVIFSPVLVPAVITIFLLGA). A Proline-knot motif is present at residues 58 to 69 (PLLVIFSPVLVP). The span at 123–132 (KAREMKDRAE) shows a compositional bias: basic and acidic residues. A disordered region spans residues 123–145 (KAREMKDRAEQFSQQPVAGSQTS). A compositionally biased stretch (polar residues) spans 133–145 (QFSQQPVAGSQTS).

The protein belongs to the oleosin family. As to expression, expressed in seeds (at protein level).

The protein resides in the lipid droplet. It localises to the membrane. Functionally, may have a structural role to stabilize the lipid body during desiccation of the seed by preventing coalescence of the oil. Probably interacts with both lipid and phospholipid moieties of lipid bodies. May also provide recognition signals for specific lipase anchorage in lipolysis during seedling growth. The sequence is that of Oleosin L from Sesamum indicum (Oriental sesame).